The chain runs to 545 residues: Chaperonin GroEL (545 aa).

Residues 30–33 (TLGP), Lys-51, 87–91 (DGTTT), Gly-415, and Asp-495 each bind ATP.

The protein belongs to the chaperonin (HSP60) family. Forms a cylinder of 14 subunits composed of two heptameric rings stacked back-to-back. Interacts with the co-chaperonin GroES.

The protein resides in the cytoplasm. It catalyses the reaction ATP + H2O + a folded polypeptide = ADP + phosphate + an unfolded polypeptide.. Functionally, together with its co-chaperonin GroES, plays an essential role in assisting protein folding. The GroEL-GroES system forms a nano-cage that allows encapsulation of the non-native substrate proteins and provides a physical environment optimized to promote and accelerate protein folding. The sequence is that of Chaperonin GroEL from Shewanella baltica (strain OS155 / ATCC BAA-1091).